Reading from the N-terminus, the 302-residue chain is MHCGPPDMVCETKIVAAEDHEALPGAKKDALLAAAGAMWPPLPAAPGPAAAPPAPPPAPVAQPHGGAGGAGPPGGRGVCIREFRAAEQEAARRIFYDGIMERIPNTAFRGLRQHPRAQLLYALLAALCFAVSRSLLLTCLVPAALLGLRYYYSRKVIRAYLECALHTDMADIEQYYMKPPGSCFWVAVLDGNVVGIVAARAHEEDNTVELLRMSVDSRFRGKGIAKALGRKVLEFAVVHNYSAVVLGTTAVKVAAHKLYESLGFRHMGASDHYVLPGMTLSLAERLFFQVRYHRYRLQLREE.

The span at proline 46–valine 60 shows a compositional bias: pro residues. The tract at residues proline 46 to proline 72 is disordered. The helical transmembrane segment at tyrosine 121 to valine 141 threads the bilayer. The N-acetyltransferase domain occupies alanine 143–alanine 283.

The protein belongs to the NAT8 family. Expressed in brain.

The protein localises to the cytoplasm. The protein resides in the microsome membrane. Its subcellular location is the mitochondrion membrane. It localises to the endoplasmic reticulum membrane. It catalyses the reaction L-aspartate + acetyl-CoA = N-acetyl-L-aspartate + CoA + H(+). With respect to regulation, aminooxyacetic acid (AOAA) blocks its activity in both cytoplasm and mitochondria. Its function is as follows. Catalyzes the synthesis of N-acetylaspartate acid (NAA) from L-aspartate and acetyl-CoA. Promotes dopamine uptake by regulating TNF-alpha expression. Attenuates methamphetamine-induced inhibition of dopamine uptake. This Homo sapiens (Human) protein is N-acetylaspartate synthetase.